We begin with the raw amino-acid sequence, 637 residues long: MNDTIQATDAAHAHSTHQHSMRALAIAAIGVVFGDIGTSPLYALKEAFSPAHGIPLTESSILGVISLLFWAIILVVGIKYLLFVMRADNNGEGGVLALMALSLRPLDPKTRVAGALMALGIFGACMFYGDAVITPAISVMSAVEGLEIATPHLSHLVLPITIVILIALFWIQRHGTALVGKLFGPIMVVWFIVIAALGVYHIARVPGIIAAINPYYAASFMADHLLQAYVVLGSVVLVLTGAEALYADMGHFGAKPIRLAAYGLVMPSLVLNYFGQGALLIQNPKAIENPFFLLAPEWGLLPLVVLSTVATVIASQAVISGAYSLTSQAIQLGYVPRMKVLHTSELAIGQIYVPVVNWLLLFVILCIVIGFKSSDNLAAAYGIAVTATMVITTVLACVVMVKVWNWNRLLVGAIIAVFLAIDLGFFGANLLKVAQGGWLPLGIGALLFFLLMTWYKGRHIVKERTAADGIPLEPFLQGLLAHPPHRVSGTAIYLTGNDKLVPVSLLHNLKHNKVLHERTIFLTFVTRDIPYVRDDTRLSSRDAGGGLYIVKAQYGFNETPDVKAVLEEFGRSHDMTFELMDTSFFLARETVVPTHLPGMSIWRERVFAWMHQNAAKPTDFFSIPANRVVELGTKIEI.

Transmembrane regions (helical) follow at residues 24-44 (LAIA…LYAL), 64-84 (VISL…LLFV), 113-133 (AGAL…DAVI), 151-171 (PHLS…LFWI), 182-202 (LFGP…VYHI), 225-245 (LLQA…AEAL), 261-281 (AYGL…ALLI), 290-310 (PFFL…STVA), 351-371 (IYVP…VIGF), 381-401 (YGIA…VVMV), 409-429 (LLVG…FGAN), and 433-453 (VAQG…LLMT).

It belongs to the HAK/KUP transporter (TC 2.A.72) family.

Its subcellular location is the cell inner membrane. It carries out the reaction K(+)(in) + H(+)(in) = K(+)(out) + H(+)(out). Functionally, transport of potassium into the cell. Likely operates as a K(+):H(+) symporter. In Burkholderia ambifaria (strain ATCC BAA-244 / DSM 16087 / CCUG 44356 / LMG 19182 / AMMD) (Burkholderia cepacia (strain AMMD)), this protein is Probable potassium transport system protein Kup.